The primary structure comprises 265 residues: MKLLISNDDGISALGIRTLANALAEAGHDVTVVCPDRERSATGHGLTLHQPIRAEIVESIFHPAIKAWACDGTPSDCVKLALWALLESPPDLVLSGINQGANLGTEILYSGTVSAAMEGMIEGIPSIAFSLTSHISRNFQPAAKFATILVEQLAAKPIPDLMLLNVNIPPVEWEEIAGVKLTRQGVRRYVDVFDKRTDPRGKTYYWLTGEVLEEVEPPEGLNLPQNVPIDVHVVRNNYISITPLQYNLTYATGIDKLSDWDFPLS.

The a divalent metal cation site is built by aspartate 8, aspartate 9, serine 40, and asparagine 98.

This sequence belongs to the SurE nucleotidase family. It depends on a divalent metal cation as a cofactor.

It is found in the cytoplasm. The catalysed reaction is a ribonucleoside 5'-phosphate + H2O = a ribonucleoside + phosphate. In terms of biological role, nucleotidase that shows phosphatase activity on nucleoside 5'-monophosphates. This Nostoc sp. (strain PCC 7120 / SAG 25.82 / UTEX 2576) protein is 5'-nucleotidase SurE.